The sequence spans 471 residues: SVGFKAGVKEYKLTYYTPEYETKDTDILAAFRVTPQPGVPPEEAGAAVAAESSTGTWTTVWTDGLTSLDRYKGRCYGIEPVPGEEDQYIAYVAYPLDLFEEGSVTNMFTSIVGNVFGFKALRALRLEDLRIPTAYIKTFQGPPHAIQVERDKLNKYGRPLLGCTIKPKLGLSAKNYGRAVYECLRGGLDFTKDDENVNSQPFMRWRDRFLFCAEALYKAQAETGEIKGHYLNATAGTCEEMIKRAVFARELGVPIVMHDYLTGGFTANTSLAHYCRDNGLLLHIHRAMHAVIDRQKNHGMHFRVLAKALRLSGGDHXHAGTVVGKLXGERDITLGFVDLLRDDFIDKDRSRGIYFTQDWVSLPGVLPVRSGGIHVWHMPALTEIFGDDAVLQFGGGTLGHPWGNAPGAVANRVALEACVKARNEGRDLAVEGNEIIREASKWSPELAAACEGWKAIRFNFKAVDTLDKPSS.

N6,N6,N6-trimethyllysine is present on K5. Substrate contacts are provided by N114 and T164. K166 serves as the catalytic Proton acceptor. K168 contributes to the substrate binding site. The Mg(2+) site is built by K192, D194, and E195. N6-carboxylysine is present on K192. Residue H285 is the Proton acceptor of the active site. R286, H318, and S370 together coordinate substrate.

The protein belongs to the RuBisCO large chain family. Type I subfamily. In terms of assembly, heterohexadecamer of 8 large chains and 8 small chains; disulfide-linked. The disulfide link is formed within the large subunit homodimers. Mg(2+) is required as a cofactor. In terms of processing, the disulfide bond which can form in the large chain dimeric partners within the hexadecamer appears to be associated with oxidative stress and protein turnover.

The protein localises to the plastid. The protein resides in the chloroplast. The enzyme catalyses 2 (2R)-3-phosphoglycerate + 2 H(+) = D-ribulose 1,5-bisphosphate + CO2 + H2O. It carries out the reaction D-ribulose 1,5-bisphosphate + O2 = 2-phosphoglycolate + (2R)-3-phosphoglycerate + 2 H(+). Functionally, ruBisCO catalyzes two reactions: the carboxylation of D-ribulose 1,5-bisphosphate, the primary event in carbon dioxide fixation, as well as the oxidative fragmentation of the pentose substrate in the photorespiration process. Both reactions occur simultaneously and in competition at the same active site. The protein is Ribulose bisphosphate carboxylase large chain of Chiococca alba (West Indian milkberry).